The primary structure comprises 382 residues: Intermediate transcription factor 3 large subunit (382 aa).

This sequence belongs to the poxviruses A23 family. As to quaternary structure, heterodimer of a 45 kDa and a 32 kDa subunit.

In terms of biological role, acts with RNA polymerase to initiate transcription from intermediate gene promoters. In Ectromelia virus (strain Moscow) (ECTV), this protein is Intermediate transcription factor 3 large subunit (VITF3L).